The sequence spans 108 residues: Probable endonuclease 4 (108 aa).

5 residues coordinate Zn(2+): His2, His36, Asp49, His51, and Glu81.

It belongs to the AP endonuclease 2 family. The cofactor is Zn(2+).

The enzyme catalyses Endonucleolytic cleavage to 5'-phosphooligonucleotide end-products.. Its function is as follows. Endonuclease IV plays a role in DNA repair. It cleaves phosphodiester bonds at apurinic or apyrimidinic (AP) sites, generating a 3'-hydroxyl group and a 5'-terminal sugar phosphate. This chain is Probable endonuclease 4 (nfo), found in Thermotoga neapolitana.